The primary structure comprises 95 residues: Large ribosomal subunit protein uL23 (95 aa).

This sequence belongs to the universal ribosomal protein uL23 family. In terms of assembly, part of the 50S ribosomal subunit. Contacts protein L29, and trigger factor when it is bound to the ribosome.

Its function is as follows. One of the early assembly proteins it binds 23S rRNA. One of the proteins that surrounds the polypeptide exit tunnel on the outside of the ribosome. Forms the main docking site for trigger factor binding to the ribosome. The sequence is that of Large ribosomal subunit protein uL23 from Desulfitobacterium hafniense (strain Y51).